Here is a 436-residue protein sequence, read N- to C-terminus: Trigger factor (436 aa).

One can recognise a PPIase FKBP-type domain in the interval 161–246 (DDQLNIDFVG…VNSVSEPKLP (86 aa)).

The protein belongs to the FKBP-type PPIase family. Tig subfamily.

The protein localises to the cytoplasm. It carries out the reaction [protein]-peptidylproline (omega=180) = [protein]-peptidylproline (omega=0). Its function is as follows. Involved in protein export. Acts as a chaperone by maintaining the newly synthesized protein in an open conformation. Functions as a peptidyl-prolyl cis-trans isomerase. The sequence is that of Trigger factor from Pseudomonas fluorescens (strain ATCC BAA-477 / NRRL B-23932 / Pf-5).